A 269-amino-acid chain; its full sequence is Thymidylate synthase (269 aa).

DUMP is bound by residues R21 and R125–R126. The active-site Nucleophile is the C145. Residues R171–D174, N182, and H212–Y214 each bind dUMP. D174 contributes to the (6R)-5,10-methylene-5,6,7,8-tetrahydrofolate binding site. Residue A268 coordinates (6R)-5,10-methylene-5,6,7,8-tetrahydrofolate.

The protein belongs to the thymidylate synthase family. Bacterial-type ThyA subfamily. Homodimer.

The protein resides in the cytoplasm. It carries out the reaction dUMP + (6R)-5,10-methylene-5,6,7,8-tetrahydrofolate = 7,8-dihydrofolate + dTMP. It participates in pyrimidine metabolism; dTTP biosynthesis. Catalyzes the reductive methylation of 2'-deoxyuridine-5'-monophosphate (dUMP) to 2'-deoxythymidine-5'-monophosphate (dTMP) while utilizing 5,10-methylenetetrahydrofolate (mTHF) as the methyl donor and reductant in the reaction, yielding dihydrofolate (DHF) as a by-product. This enzymatic reaction provides an intracellular de novo source of dTMP, an essential precursor for DNA biosynthesis. This Cutibacterium acnes (strain DSM 16379 / KPA171202) (Propionibacterium acnes) protein is Thymidylate synthase.